A 323-amino-acid polypeptide reads, in one-letter code: MIDFGNFYSLIAKNHLSHWLETLPAQIANWQREQQHGLFKQWSNAVEFLPEIKPYRLDLLHSVTAESEEPLSAGQIKRIETLMRNLMPWRKGPFSLYGVNIDTEWRSDWKWDRVLPHLSDLTGRTILDVGCGSGYHMWRMIGAGAHLAVGIDPTQLFLCQFEAVRKLLGNDQRAHLLPLGIEQLPALKAFDTVFSMGVLYHRRSPLEHLWQLKDQLVNEGELVLETLVIDGDENTVLVPGDRYAQMRNVYFIPSALALKNWLKKCGFVDIRIVDVCVTTTEEQRRTEWMVTESLSDFLDPHDPSKTVEGYPAPKRAVLIARKP.

Carboxy-S-adenosyl-L-methionine-binding positions include lysine 91, tryptophan 105, lysine 110, glycine 130, 152–154 (DPT), 181–182 (IE), methionine 196, tyrosine 200, and arginine 315.

This sequence belongs to the class I-like SAM-binding methyltransferase superfamily. CmoB family. Homotetramer.

The catalysed reaction is carboxy-S-adenosyl-L-methionine + 5-hydroxyuridine(34) in tRNA = 5-carboxymethoxyuridine(34) in tRNA + S-adenosyl-L-homocysteine + H(+). Catalyzes carboxymethyl transfer from carboxy-S-adenosyl-L-methionine (Cx-SAM) to 5-hydroxyuridine (ho5U) to form 5-carboxymethoxyuridine (cmo5U) at position 34 in tRNAs. This is tRNA U34 carboxymethyltransferase from Escherichia coli O139:H28 (strain E24377A / ETEC).